Consider the following 269-residue polypeptide: 4-hydroxy-tetrahydrodipicolinate reductase (269 aa).

Residues 10-15 (GANGRM), Glu36, 99-101 (GTT), and 123-126 (AANF) each bind NAD(+). Catalysis depends on His156, which acts as the Proton donor/acceptor. His157 provides a ligand contact to (S)-2,3,4,5-tetrahydrodipicolinate. Lys160 acts as the Proton donor in catalysis. Residue 166–167 (GT) participates in (S)-2,3,4,5-tetrahydrodipicolinate binding.

It belongs to the DapB family.

It localises to the cytoplasm. The enzyme catalyses (S)-2,3,4,5-tetrahydrodipicolinate + NAD(+) + H2O = (2S,4S)-4-hydroxy-2,3,4,5-tetrahydrodipicolinate + NADH + H(+). It carries out the reaction (S)-2,3,4,5-tetrahydrodipicolinate + NADP(+) + H2O = (2S,4S)-4-hydroxy-2,3,4,5-tetrahydrodipicolinate + NADPH + H(+). The protein operates within amino-acid biosynthesis; L-lysine biosynthesis via DAP pathway; (S)-tetrahydrodipicolinate from L-aspartate: step 4/4. Its function is as follows. Catalyzes the conversion of 4-hydroxy-tetrahydrodipicolinate (HTPA) to tetrahydrodipicolinate. This Neisseria meningitidis serogroup B (strain ATCC BAA-335 / MC58) protein is 4-hydroxy-tetrahydrodipicolinate reductase.